The primary structure comprises 123 residues: Con-ikot-ikot (123 aa).

Residues 1–18 (MAMNMSMTLCMFVMVVVA) form the signal peptide. The propeptide occupies 19–37 (ATVIDSTQLQEPDLSRMRR). 5 disulfide bridges follow: Cys49–Cys80, Cys50–Cys89, Cys57–Cys72, Cys90–Cys118, and Cys96–Cys113.

In terms of assembly, homodimer; disulfide-linked. Expressed by the venom duct.

The protein resides in the secreted. In terms of biological role, potently and selectively blocks the desensitization of ionotropic glutamate AMPA receptors (GRIA1, GRIA2, GRIA3 and GRIA4). Binds to a different site than does the drug cyclothiazide. The toxin acts like a straitjacket on the 'gating ring' of the ligand-binding domain (LBD) of the receptor. It does so by restraining the domains via both intra- and interdimer cross-links such that agonist-induced closure of the LBD 'clamshells' is transduced into an irislike expansion of the gating ring. Compared to other desensitization blockers, it is a poor stabilizer of the open channel because toxin-bound AMPA receptors undergo frequent brief closures. In vitro, application of the toxin to hippocampal slices causes a large and rapid increase in resting AMPA receptor-mediated current leading to neuronal death. The sequence is that of Con-ikot-ikot from Conus striatus (Striated cone).